Reading from the N-terminus, the 1240-residue chain is DNA polymerase catalytic subunit (1240 aa).

Positions 1-26 (MFCAAGGPASPGGKSAARAASGFFAP) are enriched in low complexity. Disordered regions lie at residues 1 to 65 (MFCA…PAQR), 646 to 695 (GLDK…RETG), and 1103 to 1139 (AAAPGDEPAPPAALPSPAKRPRETPSHADPPGGASKP). Polar residues predominate over residues 44–56 (NFYNPHLAQTGTQ). Residues 669 to 688 (NGDEDKDDDEDGDEDGDERE) show a composition bias toward acidic residues.

This sequence belongs to the DNA polymerase type-B family. In terms of assembly, forms a complex with the ssDNA-binding protein UL29, the DNA polymerase processivity factor, and the alkaline exonuclease. Interacts with the putative helicase-primase complex subunit UL8; this interaction may coordinate leading and lagging strand DNA synthesis at the replication fork.

Its subcellular location is the host nucleus. The catalysed reaction is DNA(n) + a 2'-deoxyribonucleoside 5'-triphosphate = DNA(n+1) + diphosphate. It catalyses the reaction Endonucleolytic cleavage to 5'-phosphomonoester.. In terms of biological role, replicates viral genomic DNA. The replication complex is composed of six viral proteins: the DNA polymerase, processivity factor, primase, primase-associated factor, helicase, and ssDNA-binding protein. Additionally, the polymerase contains an intrinsic ribonuclease H (RNase H) activity that specifically degrades RNA/DNA heteroduplexes or duplex DNA substrates in the 5' to 3' direction. Therefore, it can catalyze the excision of the RNA primers that initiate the synthesis of Okazaki fragments at a replication fork during viral DNA replication. The polypeptide is DNA polymerase catalytic subunit (Human herpesvirus 2 (strain 186) (HHV-2)).